A 107-amino-acid chain; its full sequence is Translation initiation factor IF-1, chloroplastic (107 aa).

The 76-residue stretch at 8 to 83 (REKKNPREAK…SKGRIIYRLP (76 aa)) folds into the S1-like domain. Residues 81–107 (RLPHKDSKRTEDSKDTEDLKDTKDSKG) are disordered. Basic and acidic residues predominate over residues 83–107 (PHKDSKRTEDSKDTEDLKDTKDSKG).

The protein belongs to the IF-1 family. In terms of assembly, component of the 30S ribosomal translation pre-initiation complex which assembles on the 30S ribosome in the order IF-2 and IF-3, IF-1 and N-formylmethionyl-tRNA(fMet); mRNA recruitment can occur at any time during PIC assembly.

It is found in the plastid. It localises to the chloroplast. One of the essential components for the initiation of protein synthesis. Stabilizes the binding of IF-2 and IF-3 on the 30S subunit to which N-formylmethionyl-tRNA(fMet) subsequently binds. Helps modulate mRNA selection, yielding the 30S pre-initiation complex (PIC). Upon addition of the 50S ribosomal subunit IF-1, IF-2 and IF-3 are released leaving the mature 70S translation initiation complex. The protein is Translation initiation factor IF-1, chloroplastic of Oryza sativa subsp. indica (Rice).